The chain runs to 348 residues: Anthranilate phosphoribosyltransferase (348 aa).

5-phospho-alpha-D-ribose 1-diphosphate-binding positions include G91, 94-95 (GD), T99, 101-104 (NIST), 119-127 (KHGNRSASG), and S131. G91 is an anthranilate binding site. S103 is a Mg(2+) binding site. N122 contacts anthranilate. R177 contributes to the anthranilate binding site. Residues D236 and E237 each contribute to the Mg(2+) site.

The protein belongs to the anthranilate phosphoribosyltransferase family. Homodimer. It depends on Mg(2+) as a cofactor.

It catalyses the reaction N-(5-phospho-beta-D-ribosyl)anthranilate + diphosphate = 5-phospho-alpha-D-ribose 1-diphosphate + anthranilate. The protein operates within amino-acid biosynthesis; L-tryptophan biosynthesis; L-tryptophan from chorismate: step 2/5. Functionally, catalyzes the transfer of the phosphoribosyl group of 5-phosphorylribose-1-pyrophosphate (PRPP) to anthranilate to yield N-(5'-phosphoribosyl)-anthranilate (PRA). The protein is Anthranilate phosphoribosyltransferase of Synechococcus sp. (strain ATCC 27144 / PCC 6301 / SAUG 1402/1) (Anacystis nidulans).